Reading from the N-terminus, the 525-residue chain is BTB/POZ domain-containing protein 2 (525 aa).

Residues 1 to 86 form a disordered region; sequence MAAGGSGGRA…AEEAAGPGAA (86 aa). A compositionally biased stretch (gly residues) spans 16–26; sequence VGVGPGTGGSP. Low complexity predominate over residues 27-55; that stretch reads GPSANAAATPAPGNAAAAAAAAAAAAAAP. Residues 56–65 are compositionally biased toward pro residues; it reads GPTPPAPPGP. The segment covering 66 to 86 has biased composition (low complexity); that stretch reads GTDAQAAGAERAEEAAGPGAA. The region spanning 117–187 is the BTB domain; that stretch reads CDVHFLVGKG…LYSDEVQIGP (71 aa).

In terms of assembly, interacts with topoisomerase 1 and with TRIM5 isoform Delta.

It is found in the cytoplasm. The polypeptide is BTB/POZ domain-containing protein 2 (BTBD2) (Homo sapiens (Human)).